A 58-amino-acid polypeptide reads, in one-letter code: Small ribosomal subunit protein bS21 (58 aa).

A disordered region spans residues 35-58; it reads REHYESPSVRRKKKSEAARKRRYK. Positions 43 to 58 are enriched in basic residues; that stretch reads VRRKKKSEAARKRRYK.

This sequence belongs to the bacterial ribosomal protein bS21 family.

This Acetivibrio thermocellus (strain ATCC 27405 / DSM 1237 / JCM 9322 / NBRC 103400 / NCIMB 10682 / NRRL B-4536 / VPI 7372) (Clostridium thermocellum) protein is Small ribosomal subunit protein bS21.